Reading from the N-terminus, the 362-residue chain is Phosphoserine aminotransferase (362 aa).

L-glutamate-binding residues include serine 9 and arginine 42. Residues 76 to 77, tryptophan 102, threonine 153, aspartate 174, and glutamine 197 contribute to the pyridoxal 5'-phosphate site; that span reads GR. At lysine 198 the chain carries N6-(pyridoxal phosphate)lysine. 239 to 240 provides a ligand contact to pyridoxal 5'-phosphate; sequence NT.

This sequence belongs to the class-V pyridoxal-phosphate-dependent aminotransferase family. SerC subfamily. In terms of assembly, homodimer. The cofactor is pyridoxal 5'-phosphate.

It is found in the cytoplasm. It carries out the reaction O-phospho-L-serine + 2-oxoglutarate = 3-phosphooxypyruvate + L-glutamate. The catalysed reaction is 4-(phosphooxy)-L-threonine + 2-oxoglutarate = (R)-3-hydroxy-2-oxo-4-phosphooxybutanoate + L-glutamate. Its pathway is amino-acid biosynthesis; L-serine biosynthesis; L-serine from 3-phospho-D-glycerate: step 2/3. It functions in the pathway cofactor biosynthesis; pyridoxine 5'-phosphate biosynthesis; pyridoxine 5'-phosphate from D-erythrose 4-phosphate: step 3/5. Catalyzes the reversible conversion of 3-phosphohydroxypyruvate to phosphoserine and of 3-hydroxy-2-oxo-4-phosphonooxybutanoate to phosphohydroxythreonine. In Escherichia fergusonii (strain ATCC 35469 / DSM 13698 / CCUG 18766 / IAM 14443 / JCM 21226 / LMG 7866 / NBRC 102419 / NCTC 12128 / CDC 0568-73), this protein is Phosphoserine aminotransferase.